The following is a 164-amino-acid chain: Diphosphoinositol polyphosphate phosphohydrolase 3-alpha (164 aa).

Substrate contacts are provided by residues Arg9, 17–19 (KKR), and 38–40 (SSR). Residues 17–144 (KKRAACLCFR…VHAEYLEKLK (128 aa)) form the Nudix hydrolase domain. Residues Gly49 and Glu65 each contribute to the Mg(2+) site. The Nudix box motif lies at 50-71 (GGMEPEEEPGGAAVREVYEEAG). The active-site Proton acceptor is the Glu68. Glu69 is a Mg(2+) binding site. Substrate contacts are provided by residues 89 to 91 (PKH), Arg115, and Lys133. The disordered stretch occupies residues 144-164 (KLGGSPTNGNSMAPSSPDSDP). Residues 148 to 164 (SPTNGNSMAPSSPDSDP) are compositionally biased toward polar residues.

It belongs to the Nudix hydrolase family. DIPP subfamily. The cofactor is Mg(2+). Requires Mn(2+) as cofactor. Mainly expressed in testis and, at lower level in brain. According to PubMed:12121577, it is widely expressed.

It localises to the cytoplasm. It catalyses the reaction diphospho-myo-inositol polyphosphate + H2O = myo-inositol polyphosphate + phosphate.. It carries out the reaction P(1),P(6)-bis(5'-adenosyl) hexaphosphate + H2O = adenosine 5'-pentaphosphate + AMP + 2 H(+). The enzyme catalyses P(1),P(5)-bis(5'-adenosyl) pentaphosphate + H2O = adenosine 5'-tetraphosphate + AMP + 2 H(+). Functionally, cleaves a beta-phosphate from the diphosphate groups in PP-InsP5 (diphosphoinositol pentakisphosphate), suggesting that it may play a role in signal transduction. Also able to catalyze the hydrolysis of dinucleoside oligophosphates, with Ap6A and Ap5A being the preferred substrates. The major reaction products are ADP and p4a from Ap6A and ADP and ATP from Ap5A. Also able to hydrolyze 5-phosphoribose 1-diphosphate. This Homo sapiens (Human) protein is Diphosphoinositol polyphosphate phosphohydrolase 3-alpha (NUDT10).